A 459-amino-acid chain; its full sequence is Ribulose bisphosphate carboxylase large chain (459 aa).

The propeptide occupies 1-2; it reads MS. N-acetylproline is present on Pro3. At Lys14 the chain carries N6,N6,N6-trimethyllysine. Residues Xaa123 and Thr173 each coordinate substrate. Residue Lys175 is the Proton acceptor of the active site. Position 177 (Lys177) interacts with substrate. Mg(2+)-binding residues include Lys201, Asp203, and Glu204. Lys201 is subject to N6-carboxylysine. His294 acts as the Proton acceptor in catalysis. Substrate contacts are provided by Arg295, His327, and Ser379.

This sequence belongs to the RuBisCO large chain family. Type I subfamily. In terms of assembly, heterohexadecamer of 8 large chains and 8 small chains; disulfide-linked. The disulfide link is formed within the large subunit homodimers. Requires Mg(2+) as cofactor. In terms of processing, the disulfide bond which can form in the large chain dimeric partners within the hexadecamer appears to be associated with oxidative stress and protein turnover.

Its subcellular location is the plastid. The protein localises to the chloroplast. The enzyme catalyses 2 (2R)-3-phosphoglycerate + 2 H(+) = D-ribulose 1,5-bisphosphate + CO2 + H2O. It carries out the reaction D-ribulose 1,5-bisphosphate + O2 = 2-phosphoglycolate + (2R)-3-phosphoglycerate + 2 H(+). Its function is as follows. RuBisCO catalyzes two reactions: the carboxylation of D-ribulose 1,5-bisphosphate, the primary event in carbon dioxide fixation, as well as the oxidative fragmentation of the pentose substrate in the photorespiration process. Both reactions occur simultaneously and in competition at the same active site. The protein is Ribulose bisphosphate carboxylase large chain of Corynocarpus laevigatus (New Zealand laurel).